The primary structure comprises 864 residues: Leucine--tRNA ligase (864 aa).

The 'HIGH' region signature appears at 50-60 (PYPSGKIHMGH). Residues 622–626 (KMSKS) carry the 'KMSKS' region motif. An ATP-binding site is contributed by Lys-625.

This sequence belongs to the class-I aminoacyl-tRNA synthetase family.

The protein localises to the cytoplasm. It carries out the reaction tRNA(Leu) + L-leucine + ATP = L-leucyl-tRNA(Leu) + AMP + diphosphate. This is Leucine--tRNA ligase from Acidiphilium cryptum (strain JF-5).